A 365-amino-acid polypeptide reads, in one-letter code: Galactoside alpha-(1,2)-fucosyltransferase 1 (365 aa).

Over 1-8 the chain is Cytoplasmic; the sequence is MWLRSHRQ. A helical; Signal-anchor for type II membrane protein transmembrane segment spans residues 9–25; sequence LCLAFLLVCVLSVIFFL. The Lumenal portion of the chain corresponds to 26–365; that stretch reads HIHQDSFPHG…LSPLWTLAKP (340 aa). N-linked (GlcNAc...) asparagine glycosylation is found at Asn-65 and Asn-327.

The protein belongs to the glycosyltransferase 11 family.

Its subcellular location is the golgi apparatus. The protein localises to the golgi stack membrane. The catalysed reaction is a beta-D-galactosyl-(1-&gt;4)-N-acetyl-beta-D-glucosaminyl derivative + GDP-beta-L-fucose = an alpha-L-Fuc-(1-&gt;2)-beta-D-Gal-(1-&gt;4)-beta-D-GlcNAc derivative + GDP + H(+). It carries out the reaction a ganglioside GA1 + GDP-beta-L-fucose = a ganglioside Fuc-GA1 + GDP + H(+). It catalyses the reaction a beta-D-Gal-(1-&gt;3)-beta-D-GlcNAc-(1-&gt;3)-beta-D-Gal-(1-&gt;4)-beta-D-Glc-(1&lt;-&gt;1')-Cer(d18:1(4E)) + GDP-beta-L-fucose = alpha-L-fucosyl-(1-&gt;2)- beta-D-galactosyl-(1-&gt;3)-N-acetyl-beta-D-glucosaminyl-(1-&gt;3)-beta-D-galactosyl-(1-&gt;4)-beta-D-glucosyl-(1&lt;-&gt;1')-N-acylsphing-4-enine + GDP + H(+). The enzyme catalyses a neolactoside nLc4Cer(d18:1(4E)) + GDP-beta-L-fucose = a neolactoside IV(2)-alpha-Fuc-nLc4Cer(d18:1(4E)) + GDP + H(+). The catalysed reaction is a ganglioside GM1 + GDP-beta-L-fucose = a ganglioside Fuc-GM1 + GDP + H(+). It carries out the reaction beta-D-galactosyl-(1-&gt;3)-N-acetyl-D-galactosamine + GDP-beta-L-fucose = alpha-L-fucosyl-(1-&gt;2)-beta-D-galactosyl-(1-&gt;3)-N-acetyl-D-galactosamine + GDP + H(+). Its pathway is protein modification; protein glycosylation. Its function is as follows. Catalyzes the transfer of L-fucose, from a guanosine diphosphate-beta-L-fucose, to the terminal galactose residue of glycoconjugates through an alpha(1,2) linkage leading to H antigen synthesis that is an intermediate substrate in the synthesis of ABO blood group antigens. H antigen is essential for maturation of the glomerular layer of the main olfactory bulb, in cell migration and early cell-cell contacts during tumor associated angiogenesis. Preferentially fucosylates soluble lactose and to a lesser extent fucosylates glycolipids gangliosides GA1 and GM1a. This is Galactoside alpha-(1,2)-fucosyltransferase 1 from Homo sapiens (Human).